Reading from the N-terminus, the 283-residue chain is Elongation factor Ts (283 aa).

The interval 79 to 82 (TDFV) is involved in Mg(2+) ion dislocation from EF-Tu.

Belongs to the EF-Ts family.

It localises to the cytoplasm. In terms of biological role, associates with the EF-Tu.GDP complex and induces the exchange of GDP to GTP. It remains bound to the aminoacyl-tRNA.EF-Tu.GTP complex up to the GTP hydrolysis stage on the ribosome. The chain is Elongation factor Ts from Shewanella oneidensis (strain ATCC 700550 / JCM 31522 / CIP 106686 / LMG 19005 / NCIMB 14063 / MR-1).